We begin with the raw amino-acid sequence, 113 residues long: FK506-binding protein 1B (113 aa).

Residues 19–113 form the PPIase FKBP-type domain; the sequence is GQTVVIEYTG…IFDVYLKGLQ (95 aa).

The protein belongs to the FKBP-type PPIase family. FKBP1 subfamily.

The protein localises to the cytoplasm. The enzyme catalyses [protein]-peptidylproline (omega=180) = [protein]-peptidylproline (omega=0). Its activity is regulated as follows. Inhibited by both FK506 and rapamycin. PPIases accelerate the folding of proteins. It catalyzes the cis-trans isomerization of proline imidic peptide bonds in oligopeptides. The sequence is that of FK506-binding protein 1B (fkr-3) from Neurospora crassa (strain ATCC 24698 / 74-OR23-1A / CBS 708.71 / DSM 1257 / FGSC 987).